The sequence spans 157 residues: MALPEENPVYGPFFGVMGAAAAIIFSALGAAYGTAKSGTGIAAMSVMRPELIMKSIIPVVMAGIIAIYGLVVAVLIAGSLDTPTKYSLYKGFIHLGAGLAVGFSGLAAGFAIGIVGDAGVRGTAQQPRLFVGMILILIFAEVLGLYGLIVAIYLYTK.

The Lumenal portion of the chain corresponds to 1–10 (MALPEENPVY). Residues 11-33 (GPFFGVMGAAAAIIFSALGAAYG) form a helical membrane-spanning segment. Residues 34–55 (TAKSGTGIAAMSVMRPELIMKS) are Cytoplasmic-facing. Residues 56 to 76 (IIPVVMAGIIAIYGLVVAVLI) form a helical membrane-spanning segment. Residues 77–94 (AGSLDTPTKYSLYKGFIH) lie on the Lumenal side of the membrane. Residues 95-116 (LGAGLAVGFSGLAAGFAIGIVG) traverse the membrane as a helical segment. Residues 117–128 (DAGVRGTAQQPR) lie on the Cytoplasmic side of the membrane. The chain crosses the membrane as a helical span at residues 129–154 (LFVGMILILIFAEVLGLYGLIVAIYL). The Lumenal portion of the chain corresponds to 155–157 (YTK).

Belongs to the V-ATPase proteolipid subunit family. As to quaternary structure, V-ATPase is a heteromultimeric enzyme made up of two complexes: the ATP-hydrolytic V1 complex and the proton translocation V0 complex. The V1 complex consists of three catalytic AB heterodimers that form a heterohexamer, three peripheral stalks each consisting of EG heterodimers, one central rotor including subunits D and F, and the regulatory subunits C and H. The proton translocation complex V0 consists of the proton transport subunit a, a ring of proteolipid subunits c9c'', rotary subunit d, subunits e and f, and the accessory subunits VhaAC45 and ATP6AP2.

The protein localises to the membrane. In terms of biological role, proton-conducting pore forming subunit of the V0 complex of vacuolar(H+)-ATPase (V-ATPase), a multisubunit enzyme composed of a peripheral complex (V1) that hydrolyzes ATP and a membrane integral complex (V0) that translocates protons. V-ATPase is responsible for acidifying and maintaining the pH of intracellular compartments and in some cell types, is targeted to the plasma membrane, where it is responsible for acidifying the extracellular environment. The polypeptide is V-type proton ATPase 16 kDa proteolipid subunit c (Aedes aegypti (Yellowfever mosquito)).